Reading from the N-terminus, the 741-residue chain is Ion-translocating oxidoreductase complex subunit C (741 aa).

2 4Fe-4S ferredoxin-type domains span residues 369 to 397 (GEPQ…QQLY) and 407 to 436 (KATT…VQYF). Residues C377, C380, C383, C387, C416, C419, C422, and C426 each contribute to the [4Fe-4S] cluster site. The tract at residues 627–654 (IARAKARKLEQQQQANAEPEEQVDPRKA) is disordered.

This sequence belongs to the 4Fe4S bacterial-type ferredoxin family. RnfC subfamily. In terms of assembly, the complex is composed of six subunits: RsxA, RsxB, RsxC, RsxD, RsxE and RsxG. Requires [4Fe-4S] cluster as cofactor.

The protein resides in the cell inner membrane. Its function is as follows. Part of a membrane-bound complex that couples electron transfer with translocation of ions across the membrane. Required to maintain the reduced state of SoxR. This is Ion-translocating oxidoreductase complex subunit C from Escherichia coli O127:H6 (strain E2348/69 / EPEC).